We begin with the raw amino-acid sequence, 98 residues long: NADH-ubiquinone oxidoreductase chain 4L (98 aa).

A run of 3 helical transmembrane segments spans residues 2-22 (PSIS…MLIF), 29-49 (SLLC…LTIL), and 61-81 (ILLL…LVTV).

Belongs to the complex I subunit 4L family. Core subunit of respiratory chain NADH dehydrogenase (Complex I) which is composed of 45 different subunits.

Its subcellular location is the mitochondrion inner membrane. It catalyses the reaction a ubiquinone + NADH + 5 H(+)(in) = a ubiquinol + NAD(+) + 4 H(+)(out). In terms of biological role, core subunit of the mitochondrial membrane respiratory chain NADH dehydrogenase (Complex I) which catalyzes electron transfer from NADH through the respiratory chain, using ubiquinone as an electron acceptor. Part of the enzyme membrane arm which is embedded in the lipid bilayer and involved in proton translocation. This is NADH-ubiquinone oxidoreductase chain 4L (MT-ND4L) from Hapalemur aureus (Golden bamboo lemur).